A 215-amino-acid chain; its full sequence is Octanoyltransferase (215 aa).

In terms of domain architecture, BPL/LPL catalytic spans 35 to 210; sequence PDTPDQLWVV…HCLEAIVEYG (176 aa). Substrate is bound by residues 74–81, 141–143, and 154–156; these read RGGQVTYH, SVG, and GLA. Residue Cys-172 is the Acyl-thioester intermediate of the active site.

This sequence belongs to the LipB family.

It localises to the cytoplasm. The enzyme catalyses octanoyl-[ACP] + L-lysyl-[protein] = N(6)-octanoyl-L-lysyl-[protein] + holo-[ACP] + H(+). The protein operates within protein modification; protein lipoylation via endogenous pathway; protein N(6)-(lipoyl)lysine from octanoyl-[acyl-carrier-protein]: step 1/2. Functionally, catalyzes the transfer of endogenously produced octanoic acid from octanoyl-acyl-carrier-protein onto the lipoyl domains of lipoate-dependent enzymes. Lipoyl-ACP can also act as a substrate although octanoyl-ACP is likely to be the physiological substrate. The polypeptide is Octanoyltransferase (Alkalilimnicola ehrlichii (strain ATCC BAA-1101 / DSM 17681 / MLHE-1)).